The primary structure comprises 1408 residues: DNA-directed RNA polymerase subunit beta' (1408 aa).

Positions 70, 72, 85, and 88 each coordinate Zn(2+). 3 residues coordinate Mg(2+): Asp460, Asp462, and Asp464. The Zn(2+) site is built by Cys814, Cys887, Cys894, and Cys897.

Belongs to the RNA polymerase beta' chain family. In terms of assembly, the RNAP catalytic core consists of 2 alpha, 1 beta, 1 beta' and 1 omega subunit. When a sigma factor is associated with the core the holoenzyme is formed, which can initiate transcription. The cofactor is Mg(2+). Zn(2+) serves as cofactor.

The catalysed reaction is RNA(n) + a ribonucleoside 5'-triphosphate = RNA(n+1) + diphosphate. Functionally, DNA-dependent RNA polymerase catalyzes the transcription of DNA into RNA using the four ribonucleoside triphosphates as substrates. The chain is DNA-directed RNA polymerase subunit beta' from Hydrogenovibrio crunogenus (strain DSM 25203 / XCL-2) (Thiomicrospira crunogena).